Here is a 565-residue protein sequence, read N- to C-terminus: Potassium-transporting ATPase potassium-binding subunit (565 aa).

Helical transmembrane passes span 6-26 (LMLLGLLILLLLILAPLLGSL), 63-83 (LLAILAFNLLGIVLLFALLMA), 132-152 (GLGVQNFLSAASGIAVLFALI), 175-195 (LYVLLPLSLLLSLLFVSQGVI), 250-270 (LSNLLQMVAIFLLPTALCFAF), 283-303 (LLWTMSLIFIVAAGCVMYAEL), 327-347 (FGILASALYAVVTTAASCGAV), 354-374 (FTALGGMVPMWLMQIGEVVFG), 379-399 (GLYGMLLFVLLTVFIAGLMIG), 418-438 (ALAILIPPALVLTGSAIALLC), 483-503 (LLLALVMLIGRFGVIIPVMAI), and 524-544 (GALFVSLLIGTILLVGALTFI).

The protein belongs to the KdpA family. The system is composed of three essential subunits: KdpA, KdpB and KdpC.

It is found in the cell inner membrane. Its function is as follows. Part of the high-affinity ATP-driven potassium transport (or Kdp) system, which catalyzes the hydrolysis of ATP coupled with the electrogenic transport of potassium into the cytoplasm. This subunit binds the periplasmic potassium ions and delivers the ions to the membrane domain of KdpB through an intramembrane tunnel. The chain is Potassium-transporting ATPase potassium-binding subunit from Edwardsiella ictaluri (strain 93-146).